Reading from the N-terminus, the 331-residue chain is Barley B recombinant-like protein D (331 aa).

Positions 43–101 (ALMNDRDNAIRERDHALAEKKAAIAERDMAFTQRDAAMAERNAAVVERDNALAALELAR) form a coiled coil. Residues 51–86 (AIRERDHALAEKKAAIAERDMAFTQRDAAMAERNAA) form an alanine-zipper region. The span at 104–122 (GLNMNNGNGFPQGSLSGSK) shows a compositional bias: polar residues. Disordered stretches follow at residues 104 to 140 (GLNM…PLQL) and 156 to 205 (AYPI…VGMS).

Belongs to the BBR/BPC family. Homodimer. Heterodimer.

The protein resides in the nucleus. Functionally, transcriptional regulator that specifically binds to GA-rich elements (GAGA-repeats) present in regulatory sequences of genes involved in developmental processes. The chain is Barley B recombinant-like protein D from Oryza sativa subsp. japonica (Rice).